A 92-amino-acid chain; its full sequence is MIDIVKYPVLTEKATRLLENNQYTFDVDPKANKITIKALIEDFFNVKVLSVNTHRPPRKKRRIGRSEGYRPNYKRVIVTLKTGDSIKLLPET.

It belongs to the universal ribosomal protein uL23 family. Part of the 50S ribosomal subunit.

The protein localises to the plastid. It is found in the chloroplast. Binds to 23S rRNA. The sequence is that of Large ribosomal subunit protein uL23c (rpl23) from Mesostigma viride (Green alga).